The sequence spans 242 residues: RxLR effector protein PexRD15 (242 aa).

The N-terminal stretch at 1-24 (MMKSLYAVNLVLLLLLAFFAPAPA) is a signal peptide. The short motif at 48–66 (RLLRAHSSDKEEQKEEEER) is the RxLR-dEER element.

This sequence belongs to the RxLR effector family.

The protein resides in the secreted. Its subcellular location is the host cell membrane. Effector that enhances P.infestans colonization of Nicotiana benthamiana leaves. The sequence is that of RxLR effector protein PexRD15 from Phytophthora infestans (strain T30-4) (Potato late blight agent).